Consider the following 32-residue polypeptide: Conotoxin sr7a (32 aa).

Cystine bridges form between Cys-1–Cys-17, Cys-8–Cys-21, and Cys-16–Cys-31. Ser-32 carries the serine amide modification.

As to expression, expressed by the venom duct.

Its subcellular location is the secreted. Elicits hyperactivity when injected intracranially into mice and produces paralysis when injected into the pedal muscle of freshwater snails, Pomacea paludosa, but it has no apparent effect after intramuscular injection into the limpet Patella opea or the freshwater fish Lebistes reticulatus. The polypeptide is Conotoxin sr7a (Conus spurius (Alphabet cone)).